A 498-amino-acid chain; its full sequence is Ulvan-active sulfatase (498 aa).

The N-terminal stretch at 1 to 22 is a signal peptide; it reads MNSKKTGVIILGCIAFLHIACS. Positions 55, 56, 95, 266, and 267 each coordinate Ca(2+). The active-site Nucleophile is the Cys-95. Cys-95 carries the post-translational modification 3-oxoalanine (Cys).

This sequence belongs to the sulfatase family. Requires Ca(2+) as cofactor. Post-translationally, the conversion to 3-oxoalanine (also known as C-formylglycine, FGly), of a serine or cysteine residue in prokaryotes and of a cysteine residue in eukaryotes, is critical for catalytic activity. This post-translational modification is severely defective in multiple sulfatase deficiency (MSD).

It is found in the periplasm. In terms of biological role, sulfatase involved in ulvan degradation. Ulvan is the main polysaccharide component of the Ulvales (green seaweed) cell wall. It is composed of disaccharide building blocks comprising 3-sulfated rhamnose (Rha3S) linked to D-glucuronic acid (GlcA), L-iduronic acid (IduA), or D-xylose (Xyl). This Formosa agariphila (strain DSM 15362 / KCTC 12365 / LMG 23005 / KMM 3901 / M-2Alg 35-1) protein is Ulvan-active sulfatase.